The primary structure comprises 473 residues: C3a anaphylatoxin chemotactic receptor (473 aa).

Over 1–23 the chain is Extracellular; the sequence is MESFTADTNSTDLHSRPLFKPQD. The N-linked (GlcNAc...) asparagine glycan is linked to Asn9. Residues 24 to 46 form a helical membrane-spanning segment; it reads IASMVILSLTCLLGLPGNGLVLW. The Cytoplasmic segment spans residues 47 to 57; that stretch reads VAGVKMKRTVN. Residues 58 to 80 traverse the membrane as a helical segment; the sequence is TVWFLHLTLADFLCCLSLPFSVA. The Extracellular portion of the chain corresponds to 81-96; the sequence is HLILRGHWPYGLFLCK. Residues Cys95 and Cys172 are joined by a disulfide bond. The helical transmembrane segment at 97–118 threads the bilayer; the sequence is LIPSVIILNMFASVFLLTAISL. Topologically, residues 119–139 are cytoplasmic; that stretch reads DRCLMVHKPIWCQNHRSVRTA. A helical membrane pass occupies residues 140-160; it reads FAVCGCVWVVTFVMCIPVFVY. Residues 161-329 lie on the Extracellular side of the membrane; that stretch reads RDLLVVDDYS…TPQVAITISR (169 aa). Tyr174 and Tyr184 each carry sulfotyrosine. N-linked (GlcNAc...) asparagine glycosylation occurs at Asn201. The interval 233-252 is disordered; the sequence is FHTSPEDPFSQDSASQQPHY. Sulfotyrosine is present on Tyr308. A helical transmembrane segment spans residues 330-349; it reads LVVGFLVPFFIMITCYSLIV. Topologically, residues 350–366 are cytoplasmic; it reads FRMRKTNLTKSRNKTLR. The helical transmembrane segment at 367–389 threads the bilayer; it reads VAVAVVTVFFVCWIPYHIVGILL. At 390 to 406 the chain is on the extracellular side; that stretch reads VITDQESALREVVLPWD. The chain crosses the membrane as a helical span at residues 407–427; it reads HMSIALASANSCFNPFLYALL. Residues 428–473 are Cytoplasmic-facing; that stretch reads GKDFRKKARQSVKGILEAAFSEELTHSTSCTQDKAPSKRNHMSTDV. Ser448 bears the Phosphoserine mark. The residue at position 452 (Thr452) is a Phosphothreonine.

It belongs to the G-protein coupled receptor 1 family. In terms of assembly, interacts with VGF-derived peptide TLQP-21.

It is found in the cell membrane. Its function is as follows. Receptor for the chemotactic and inflammatory peptide anaphylatoxin C3a. This receptor stimulates chemotaxis, granule enzyme release and superoxide anion production. The polypeptide is C3a anaphylatoxin chemotactic receptor (C3ar1) (Rattus norvegicus (Rat)).